Reading from the N-terminus, the 990-residue chain is Glycine dehydrogenase (decarboxylating) (990 aa).

The residue at position 726 (K726) is an N6-(pyridoxal phosphate)lysine.

Belongs to the GcvP family. The glycine cleavage system is composed of four proteins: P, T, L and H. The cofactor is pyridoxal 5'-phosphate.

The enzyme catalyses N(6)-[(R)-lipoyl]-L-lysyl-[glycine-cleavage complex H protein] + glycine + H(+) = N(6)-[(R)-S(8)-aminomethyldihydrolipoyl]-L-lysyl-[glycine-cleavage complex H protein] + CO2. The glycine cleavage system catalyzes the degradation of glycine. The P protein binds the alpha-amino group of glycine through its pyridoxal phosphate cofactor; CO(2) is released and the remaining methylamine moiety is then transferred to the lipoamide cofactor of the H protein. This chain is Glycine dehydrogenase (decarboxylating), found in Rhodopseudomonas palustris (strain ATCC BAA-98 / CGA009).